The sequence spans 723 residues: Lim and transglutaminase domain protein ltd-1 (723 aa).

In terms of domain architecture, LIM zinc-binding spans 5–72 (QHCNRCGKQV…SNHVPIAGPH (68 aa)).

It belongs to the transglutaminase-like superfamily. Expressed in the Y and U rectal epithelial cells, in marginal cells of the terminal bulb and isthmus of the pharynx (at protein level).

The protein resides in the cytoplasm. It localises to the cytoskeleton. Its function is as follows. Cytoskeleton-associated protein. May play a role in hypodermal cell development. In Caenorhabditis elegans, this protein is Lim and transglutaminase domain protein ltd-1.